Consider the following 192-residue polypeptide: ATP synthase protein MI25 (192 aa).

The chain crosses the membrane as a helical span at residues 29-49; it reads ILIYNEEMIVALCFIGFIIFS.

It belongs to the ATPase protein MI25 family. As to quaternary structure, F-type ATPases have 2 components, CF(1) - the catalytic core - and CF(0) - the membrane proton channel. CF(1) has five subunits: alpha(3), beta(3), gamma(1), delta(1), epsilon(1). CF(0) has three main subunits: a, b and c.

The protein localises to the mitochondrion membrane. Its function is as follows. This is one of the chains of the nonenzymatic component (CF(0) subunit) of the mitochondrial ATPase complex. The chain is ATP synthase protein MI25 (ATP4) from Arabidopsis thaliana (Mouse-ear cress).